A 67-amino-acid polypeptide reads, in one-letter code: Conotoxin Cl6.8 (67 aa).

Positions 1 to 22 are cleaved as a signal peptide; it reads MKVTAVLMVAVLVLTACQLTTA. The propeptide occupies 23-39; that stretch reads NTTDYVRRILARKSTMS. Disulfide bonds link Cys43–Cys58, Cys50–Cys62, and Cys57–Cys66. Cys66 is modified (cysteine amide).

It belongs to the conotoxin O1 superfamily. In terms of tissue distribution, expressed by the venom duct.

It is found in the secreted. The chain is Conotoxin Cl6.8 from Californiconus californicus (California cone).